The primary structure comprises 336 residues: Myb family transcription factor PHL8 (336 aa).

One can recognise an HTH myb-type domain in the interval 31–91 (TDAKPRLKWT…HLQKYRLGKS (61 aa)). The H-T-H motif DNA-binding region spans 62-87 (PKGLMKVMEIPGLTLYHLKSHLQKYR). Positions 100 to 134 (EVSSASENQEVESKNDSRDLRGCSVTEENSNPAKE) are disordered. Over residues 110-120 (VESKNDSRDLR) the composition is skewed to basic and acidic residues. Positions 139–159 (TEALQMQMEVQKKLHEQIEVQ) form a coiled coil. The short motif at 152–157 (LHEQIE) is the LHEQLE element.

Belongs to the MYB-CC family.

Its subcellular location is the nucleus. In Arabidopsis thaliana (Mouse-ear cress), this protein is Myb family transcription factor PHL8.